A 144-amino-acid chain; its full sequence is Small ribosomal subunit protein eS12y (144 aa).

An N-acetylserine modification is found at Ser2.

It belongs to the eukaryotic ribosomal protein eS12 family.

The polypeptide is Small ribosomal subunit protein eS12y (RPS12C) (Arabidopsis thaliana (Mouse-ear cress)).